We begin with the raw amino-acid sequence, 492 residues long: Regulatory protein ViaA (492 aa).

Belongs to the ViaA family. Homodimer. Interacts with RavA.

Its subcellular location is the cytoplasm. Its function is as follows. Component of the RavA-ViaA chaperone complex, which may act on the membrane to optimize the function of some of the respiratory chains. ViaA stimulates the ATPase activity of RavA. The sequence is that of Regulatory protein ViaA from Pectobacterium atrosepticum (strain SCRI 1043 / ATCC BAA-672) (Erwinia carotovora subsp. atroseptica).